The chain runs to 322 residues: Sideroflexin-2 (322 aa).

Residue methionine 1 is modified to N-acetylmethionine. A run of 5 helical transmembrane segments spans residues 99–119, 147–167, 174–194, 223–243, and 266–286; these read GMLI…VIFW, ALSY…MNMW, LVGR…NIPM, VGIA…MILL, and LQVL…CGLF.

The protein belongs to the sideroflexin family. As to expression, expressed in brain, heart, kidney, spleen, thymus, liver, stomach and skin.

It localises to the mitochondrion inner membrane. The protein resides in the mitochondrion outer membrane. The enzyme catalyses L-serine(in) = L-serine(out). Its function is as follows. Mitochondrial amino-acid transporter that mediates transport of serine into mitochondria. Involved in mitochondrial iron homeostasis by regulating heme biosynthesis. The chain is Sideroflexin-2 from Mus musculus (Mouse).